We begin with the raw amino-acid sequence, 161 residues long: tRNA-acetylating toxin 1 (161 aa).

Residues leucine 92, valine 94, histidine 99, glycine 100, glycine 102, glycine 104, alanine 105, leucine 132, and glutamate 135 each contribute to the acetyl-CoA site. Tyrosine 140 is a catalytic residue. Residue histidine 142 participates in acetyl-CoA binding.

Belongs to the acetyltransferase family. GNAT subfamily. As to quaternary structure, homodimer (in absence of antitoxin). Forms a complex with cognate antitoxin TacA1. Forms a 4:2 antitoxin:toxin complex with cognate antitoxin TacA1.

The enzyme catalyses glycyl-tRNA(Gly) + acetyl-CoA = N-acetylglycyl-tRNA(Gly) + CoA + H(+). Its function is as follows. Toxic component of a type II toxin-antitoxin (TA) system. Acetylates tRNA and inhibits translation, does not acetylate uncharged tRNA. Upon expression in situ acetylates only Gly-tRNA(Gly). In vitro acetylates mainly Gly and Ile/Leu. Upon induction of the toxin gene in lag phase in rich medium (but not mid-exponential phase) the lag phase is extended by several hours, locking bacteria in a non-growth state. Neutralized only by cognate antitoxin TacA1 (A8), but not by TacA2 or TacA3. Its toxic effect is neutralized by expression of peptidyl-tRNA hydrolase (pth) in lag phase. NAD-dependent protein deacylase (cobB) also play a role in detoxifying TacT targets. Expression increases persister cell formation, which is also abolished by either cognate antitoxin or Pth expression. Plays a role in persister cell formation. In terms of biological role, the TacA1-TacT1 complex binds (and probably represses) its own promoter DNA but not that of tacA3-tacT3, it does not repress the tacA3-tacT3 promoter. This Salmonella typhimurium (strain 14028s / SGSC 2262) protein is tRNA-acetylating toxin 1.